Reading from the N-terminus, the 461-residue chain is Photosystem II CP43 reaction center protein (461 aa).

The Cytoplasmic segment spans residues 1-48 (MVTLSSNSIFATNRDQESSGFAWWAGNARLINLSGKLLGAHVAHAGLI). The chain crosses the membrane as a helical span at residues 49–71 (VFWAGAMTLFELAHFIPEKPMYE). Residues 72–111 (QGLILIPHIATLGWGVGPGGEVVDTFPFFVVGVVHLISSA) are Lumenal-facing. Residues 112-133 (VLGFGGVYHAIRGPETLEEYSS) form a helical membrane-spanning segment. At 134–155 (FFGYDWKDKNKMTTILGFHLIV) the chain is on the cytoplasmic side. A helical transmembrane segment spans residues 156–178 (LGIGALLLVAKAMFFGGLYDTWA). Residues 179-232 (PGGGDVRVITNPTLDPRVIFGYLLKSPFGGEGWIVSVNNLEDVVGGHIWIGLIC) lie on the Lumenal side of the membrane. Residues 233–253 (IAGGIWHILTTPFGWARRAFI) form a helical membrane-spanning segment. Over 254–268 (WSGEAYLSYSLGALS) the chain is Cytoplasmic. Residues 269–289 (MMGFIATCFVWFNNTVYPSEF) traverse the membrane as a helical segment. The Lumenal segment spans residues 290-424 (YGPTGPEASQ…ATSHFVLAFF (135 aa)). Residue Glu355 participates in [CaMn4O5] cluster binding. The chain crosses the membrane as a helical span at residues 425–449 (FLVGHLWHAGRARAAAAGFEKGIDR). The Cytoplasmic portion of the chain corresponds to 450–461 (ESEPVLSMPSLD).

In terms of assembly, PSII is composed of 1 copy each of membrane proteins PsbA, PsbB, PsbC, PsbD, PsbE, PsbF, PsbH, PsbI, PsbJ, PsbK, PsbL, PsbM, PsbT, PsbX, PsbY, PsbZ, Psb30/Ycf12, peripheral proteins PsbO, CyanoQ (PsbQ), PsbU, PsbV and a large number of cofactors. It forms dimeric complexes. Part of a photosystem II (PSII) assembly intermediate complex PSII-I; crystallized from a strain deleted of psbJ, it forms monomeric PSII before addition of the oxygen evolving complex. PSII-I includes 3 assembly factors not found in mature PSII (Psb27, Psb28 and Psb34), and CP43 (this protein) is not in its mature conformation. Binds multiple chlorophylls and provides some of the ligands for the Ca-4Mn-5O cluster of the oxygen-evolving complex. It may also provide a ligand for a Cl- that is required for oxygen evolution. PSII binds additional chlorophylls, carotenoids and specific lipids. is required as a cofactor.

The protein localises to the cellular thylakoid membrane. One of the components of the core complex of photosystem II (PSII). It binds chlorophyll and helps catalyze the primary light-induced photochemical processes of PSII. PSII is a light-driven water:plastoquinone oxidoreductase, using light energy to abstract electrons from H(2)O, generating O(2) and a proton gradient subsequently used for ATP formation. The protein is Photosystem II CP43 reaction center protein of Thermosynechococcus vestitus (strain NIES-2133 / IAM M-273 / BP-1).